Reading from the N-terminus, the 134-residue chain is uncharacterized protein (134 aa).

This is an uncharacterized protein from Acanthamoeba polyphaga (Amoeba).